Consider the following 191-residue polypeptide: dITP/XTP pyrophosphatase (191 aa).

8-13 provides a ligand contact to substrate; the sequence is SKNQGK. Glu38 and Asp67 together coordinate Mg(2+). The Proton acceptor role is filled by Asp67. Residues Ser68, 146–149, Lys169, and 174–175 contribute to the substrate site; these read FGYD and HR.

Belongs to the HAM1 NTPase family. As to quaternary structure, homodimer. Mg(2+) is required as a cofactor.

It catalyses the reaction XTP + H2O = XMP + diphosphate + H(+). It carries out the reaction dITP + H2O = dIMP + diphosphate + H(+). The enzyme catalyses ITP + H2O = IMP + diphosphate + H(+). Pyrophosphatase that catalyzes the hydrolysis of nucleoside triphosphates to their monophosphate derivatives, with a high preference for the non-canonical purine nucleotides XTP (xanthosine triphosphate), dITP (deoxyinosine triphosphate) and ITP. Seems to function as a house-cleaning enzyme that removes non-canonical purine nucleotides from the nucleotide pool, thus preventing their incorporation into DNA/RNA and avoiding chromosomal lesions. This is dITP/XTP pyrophosphatase from Prochlorococcus marinus subsp. pastoris (strain CCMP1986 / NIES-2087 / MED4).